A 227-amino-acid polypeptide reads, in one-letter code: Lipoprotein-releasing system ATP-binding protein LolD (227 aa).

One can recognise an ABC transporter domain in the interval 8 to 226; it reads IEVTNLCKSF…VVHMADGRIT (219 aa). 44 to 51 is a binding site for ATP; that stretch reads GASGAGKT.

It belongs to the ABC transporter superfamily. Lipoprotein translocase (TC 3.A.1.125) family. As to quaternary structure, the complex is composed of two ATP-binding proteins (LolD) and two transmembrane proteins (LolC and LolE).

It is found in the cell inner membrane. Functionally, part of the ABC transporter complex LolCDE involved in the translocation of mature outer membrane-directed lipoproteins, from the inner membrane to the periplasmic chaperone, LolA. Responsible for the formation of the LolA-lipoprotein complex in an ATP-dependent manner. This is Lipoprotein-releasing system ATP-binding protein LolD from Syntrophotalea carbinolica (strain DSM 2380 / NBRC 103641 / GraBd1) (Pelobacter carbinolicus).